The following is a 597-amino-acid chain: Elongation factor 4 (597 aa).

The tr-type G domain maps to 2-184; the sequence is KHIRNFSIIA…TIVKSIPAPE (183 aa). Residues 14 to 19 and 131 to 134 contribute to the GTP site; these read DHGKST and NKID.

This sequence belongs to the TRAFAC class translation factor GTPase superfamily. Classic translation factor GTPase family. LepA subfamily.

It localises to the cell inner membrane. The enzyme catalyses GTP + H2O = GDP + phosphate + H(+). Its function is as follows. Required for accurate and efficient protein synthesis under certain stress conditions. May act as a fidelity factor of the translation reaction, by catalyzing a one-codon backward translocation of tRNAs on improperly translocated ribosomes. Back-translocation proceeds from a post-translocation (POST) complex to a pre-translocation (PRE) complex, thus giving elongation factor G a second chance to translocate the tRNAs correctly. Binds to ribosomes in a GTP-dependent manner. The protein is Elongation factor 4 of Aliivibrio fischeri (strain MJ11) (Vibrio fischeri).